Here is a 505-residue protein sequence, read N- to C-terminus: Tubby protein homolog (505 aa).

A disordered region spans residues 35 to 243 (EQKQKKKRQE…PSPAAPEPPV (209 aa)). The span at 70–87 (LVESYLSSSGSTSYQVQE) shows a compositional bias: low complexity. Residues 196–205 (FDEEEDEDEN) show a composition bias toward acidic residues. Residues 206–220 (SSSSSQLNSNTRPSS) show a composition bias toward low complexity.

This sequence belongs to the TUB family. As to quaternary structure, interacts with GNAQ. Interacts with TULP1.

The protein localises to the cytoplasm. Its subcellular location is the nucleus. It localises to the secreted. The protein resides in the cell membrane. Functions in signal transduction from heterotrimeric G protein-coupled receptors. Binds to membranes containing phosphatidylinositol 4,5-bisphosphate. Can bind DNA (in vitro). May contribute to the regulation of transcription in the nucleus. Could be involved in the hypothalamic regulation of body weight. Contribute to stimulation of phagocytosis of apoptotic retinal pigment epithelium (RPE) cells and macrophages. This is Tubby protein homolog (Tub) from Rattus norvegicus (Rat).